We begin with the raw amino-acid sequence, 483 residues long: Iron-sulfur cluster assembly SufBD family protein ycf24 (483 aa).

Belongs to the iron-sulfur cluster assembly SufBD family.

The protein localises to the plastid. Its subcellular location is the chloroplast. The protein is Iron-sulfur cluster assembly SufBD family protein ycf24 (ycf24) of Guillardia theta (Cryptophyte).